Reading from the N-terminus, the 255-residue chain is Homeobox protein Hox-D4 (255 aa).

Positions 31–128 are disordered; sequence EQGADYYGGG…KQPPPGTALK (98 aa). Pro residues predominate over residues 94-109; that stretch reads EPCPAPPAPPPAPLPG. The Antp-type hexapeptide motif lies at 133–138; it reads VYPWMK. Positions 154-213 form a DNA-binding region, homeobox; the sequence is PKRSRTAYTRQQVLELEKEFHFNRYLTRRRRIEIAHTLCLSERQIKIWFQNRRMKWKKDH. The segment at 212–255 is disordered; it reads DHKLPNTKGRSSSSSSSSSCSSSVAPSQHLQPMAKDHHTDLTTL. Residues 222–234 are compositionally biased toward low complexity; sequence SSSSSSSSSCSSS. Positions 245–255 are enriched in basic and acidic residues; it reads AKDHHTDLTTL.

The protein belongs to the Antp homeobox family. Deformed subfamily. In terms of assembly, forms a DNA-binding heterodimer with transcription factor PBX1.

The protein localises to the nucleus. In terms of biological role, sequence-specific transcription factor which is part of a developmental regulatory system that provides cells with specific positional identities on the anterior-posterior axis. The sequence is that of Homeobox protein Hox-D4 (HOXD4) from Gorilla gorilla gorilla (Western lowland gorilla).